The chain runs to 1031 residues: Kinesin heavy chain (1031 aa).

The region spanning 8-325 (NIKVVCRVRP…LMFGQRAKTI (318 aa)) is the Kinesin motor domain. 84 to 91 (GQTSSGKT) contacts ATP. The stretch at 393–857 (PKQMTVHVSE…RDNADLRCEL (465 aa)) forms a coiled coil. Residues 673-686 (TDQEDKKREEEDKM) show a composition bias toward basic and acidic residues. Disordered stretches follow at residues 673–692 (TDQE…ATEM) and 906–1031 (RNFA…EQGS). The interval 858–1031 (PKLERRLRAT…PLTTSGEQGS (174 aa)) is globular. The span at 932–949 (GSTGIRGGGYSGIRGGGS) shows a compositional bias: gly residues. 2 stretches are compositionally biased toward polar residues: residues 964 to 977 (SHNN…NPND) and 1014 to 1031 (RNNT…EQGS).

This sequence belongs to the TRAFAC class myosin-kinesin ATPase superfamily. Kinesin family. Kinesin subfamily. Oligomer composed of two heavy chains and two light chains.

Its subcellular location is the cytoplasm. The protein resides in the cytoskeleton. In terms of biological role, kinesin is a microtubule-associated force-producing protein that may play a role in organelle transport. This Strongylocentrotus purpuratus (Purple sea urchin) protein is Kinesin heavy chain.